The primary structure comprises 291 residues: NAD kinase (291 aa).

D72 functions as the Proton acceptor in the catalytic mechanism. NAD(+) is bound by residues 72-73, 146-147, R157, R174, D176, 187-192, and Q247; these read DG, ND, and TAYSLS.

The protein belongs to the NAD kinase family. Requires a divalent metal cation as cofactor.

It localises to the cytoplasm. It catalyses the reaction NAD(+) + ATP = ADP + NADP(+) + H(+). Functionally, involved in the regulation of the intracellular balance of NAD and NADP, and is a key enzyme in the biosynthesis of NADP. Catalyzes specifically the phosphorylation on 2'-hydroxyl of the adenosine moiety of NAD to yield NADP. The sequence is that of NAD kinase from Hydrogenovibrio crunogenus (strain DSM 25203 / XCL-2) (Thiomicrospira crunogena).